The primary structure comprises 255 residues: 4-diphosphocytidyl-2-C-methyl-D-erythritol kinase (255 aa).

Lys6 is an active-site residue. ATP is bound at residue 95-105; sequence PVCAGLGGGSS. Residue Asp137 is part of the active site.

This sequence belongs to the GHMP kinase family. IspE subfamily.

The enzyme catalyses 4-CDP-2-C-methyl-D-erythritol + ATP = 4-CDP-2-C-methyl-D-erythritol 2-phosphate + ADP + H(+). Its pathway is isoprenoid biosynthesis; isopentenyl diphosphate biosynthesis via DXP pathway; isopentenyl diphosphate from 1-deoxy-D-xylulose 5-phosphate: step 3/6. Catalyzes the phosphorylation of the position 2 hydroxy group of 4-diphosphocytidyl-2C-methyl-D-erythritol. This is 4-diphosphocytidyl-2-C-methyl-D-erythritol kinase from Campylobacter jejuni subsp. jejuni serotype O:6 (strain 81116 / NCTC 11828).